We begin with the raw amino-acid sequence, 210 residues long: Ribosomal RNA large subunit methyltransferase E (210 aa).

Residues G60, W62, D85, D101, and D126 each coordinate S-adenosyl-L-methionine. The Proton acceptor role is filled by K166. The span at 191–200 shows a compositional bias: basic and acidic residues; the sequence is KPKASRDKSS. The interval 191–210 is disordered; it reads KPKASRDKSSETFLVARDLK.

The protein belongs to the class I-like SAM-binding methyltransferase superfamily. RNA methyltransferase RlmE family.

It localises to the cytoplasm. The enzyme catalyses uridine(2552) in 23S rRNA + S-adenosyl-L-methionine = 2'-O-methyluridine(2552) in 23S rRNA + S-adenosyl-L-homocysteine + H(+). Its function is as follows. Specifically methylates the uridine in position 2552 of 23S rRNA at the 2'-O position of the ribose in the fully assembled 50S ribosomal subunit. In Bordetella bronchiseptica (strain ATCC BAA-588 / NCTC 13252 / RB50) (Alcaligenes bronchisepticus), this protein is Ribosomal RNA large subunit methyltransferase E.